We begin with the raw amino-acid sequence, 164 residues long: Small ribosomal subunit protein uS5 (164 aa).

The S5 DRBM domain occupies 10–73 (IEERVVAINR…ESAKKNMIEV (64 aa)).

The protein belongs to the universal ribosomal protein uS5 family. Part of the 30S ribosomal subunit. Contacts proteins S4 and S8.

In terms of biological role, with S4 and S12 plays an important role in translational accuracy. Functionally, located at the back of the 30S subunit body where it stabilizes the conformation of the head with respect to the body. The protein is Small ribosomal subunit protein uS5 of Streptococcus suis (strain 98HAH33).